The chain runs to 393 residues: S-adenosylmethionine synthase (393 aa).

Glu-9 lines the Mg(2+) pocket. ATP is bound at residue His-15. A K(+)-binding site is contributed by Glu-43. L-methionine is bound by residues Glu-56 and Gln-99. Residues Asp-167–Lys-169, Ser-235–Phe-238, Asp-246, Arg-252–Lys-253, Ala-269, Lys-273, and Lys-277 contribute to the ATP site. Asp-246 serves as a coordination point for L-methionine. Residue Lys-277 participates in L-methionine binding.

Belongs to the AdoMet synthase family. In terms of assembly, homotetramer. Mn(2+) is required as a cofactor. It depends on Mg(2+) as a cofactor. The cofactor is Co(2+). K(+) serves as cofactor.

The protein localises to the cytoplasm. It catalyses the reaction L-methionine + ATP + H2O = S-adenosyl-L-methionine + phosphate + diphosphate. It participates in amino-acid biosynthesis; S-adenosyl-L-methionine biosynthesis; S-adenosyl-L-methionine from L-methionine: step 1/1. Its function is as follows. Catalyzes the formation of S-adenosylmethionine from methionine and ATP. The reaction comprises two steps that are both catalyzed by the same enzyme: formation of S-adenosylmethionine (AdoMet) and triphosphate, and subsequent hydrolysis of the triphosphate. The chain is S-adenosylmethionine synthase (SAMS) from Brassica rapa subsp. pekinensis (Chinese cabbage).